A 489-amino-acid chain; its full sequence is MSEELKGEARYKSGVMPYKKMGYWDSDYVPKDTDVIALFRITPQEGVDHEEAAAAVAGESSTATWTVVWTDRLTACELYRAKAYRSELVPNTGPGTKNEAQYFAYIAYDLDLFEGGSIANLTASIIGNVFGFKAVKALRLEDMRIPVAYLKTFQGPATGIVVERERLDKFGRHXLGATTKPKLGLSGRNYGRVVYEGLKGGLDFMKDDENINSQPFMHWRDRFLYCMEAVNKASAATGEVKGHYLNVTAGTMEEMYERAEFAKSLGSVVVMIDLVIGYTAIQSMAKWSRKNDMILHLHRAGNSTYSRQKNHGMNFRVICKWMRMAGVDHIHAGTVVGKLEGDPLMIKGFYDTLRDTHSAKNLETGLFFDQDWASLNKVMPVASGGIHAGQMHQLLDYLGEDVILQFGGGTIGHPMGIQAGAVANRVALEAMILARNEGRDYVKEGPQILQTAAKWCTPLKQALDTWKDITFNYESTDTADFVPSTTASV.

Residues Asn128 and Thr178 each contribute to the substrate site. Lys180 serves as the catalytic Proton acceptor. Lys182 lines the substrate pocket. 3 residues coordinate Mg(2+): Lys206, Asp208, and Glu209. At Lys206 the chain carries N6-carboxylysine. His298 functions as the Proton acceptor in the catalytic mechanism. Residues Arg299, His331, and Ser383 each coordinate substrate.

It belongs to the RuBisCO large chain family. Type I subfamily. As to quaternary structure, heterohexadecamer of 8 large chains and 8 small chains. Requires Mg(2+) as cofactor.

The enzyme catalyses 2 (2R)-3-phosphoglycerate + 2 H(+) = D-ribulose 1,5-bisphosphate + CO2 + H2O. The catalysed reaction is D-ribulose 1,5-bisphosphate + O2 = 2-phosphoglycolate + (2R)-3-phosphoglycerate + 2 H(+). Its function is as follows. RuBisCO catalyzes two reactions: the carboxylation of D-ribulose 1,5-bisphosphate, the primary event in carbon dioxide fixation, as well as the oxidative fragmentation of the pentose substrate. Both reactions occur simultaneously and in competition at the same active site. The polypeptide is Ribulose bisphosphate carboxylase large chain (Nitrosospira sp. (strain 40KI)).